Reading from the N-terminus, the 254-residue chain is uncharacterized protein (254 aa).

The interval 60–161 (PKSPTTTSIS…PEIPQAAPGT (102 aa)) is disordered. 2 stretches are compositionally biased toward low complexity: residues 63–77 (PTTT…STTP) and 89–146 (TPIP…TTTS).

This is an uncharacterized protein from Caenorhabditis elegans.